We begin with the raw amino-acid sequence, 138 residues long: von Willebrand factor C domain-containing protein 2-like (138 aa).

An N-terminal signal peptide occupies residues Met-1 to Ser-21. In terms of domain architecture, VWFC spans Lys-51–Lys-110.

Peripherally associated with AMPAR complex. AMPAR complex consists of an inner core made of 4 pore-forming GluA/GRIA proteins (GRIA1, GRIA2, GRIA3 and GRIA4) and 4 major auxiliary subunits arranged in a twofold symmetry. One of the two pairs of distinct binding sites is occupied either by CNIH2, CNIH3 or CACNG2, CACNG3. The other harbors CACNG2, CACNG3, CACNG4, CACNG8 or GSG1L. This inner core of AMPAR complex is complemented by outer core constituents binding directly to the GluA/GRIA proteins at sites distinct from the interaction sites of the inner core constituents. Outer core constituents include at least PRRT1, PRRT2, CKAMP44/SHISA9, FRRS1L and NRN1. The proteins of the inner and outer core serve as a platform for other, more peripherally associated AMPAR constituents, including VWC2L. Alone or in combination, these auxiliary subunits control the gating and pharmacology of the AMPAR complex and profoundly impact their biogenesis and protein processing.

The protein localises to the secreted. It is found in the synapse. In terms of biological role, may play a role in neurogenesis. May play a role in bone differentiation and matrix mineralization. This chain is von Willebrand factor C domain-containing protein 2-like (VWC2L), found in Macaca fascicularis (Crab-eating macaque).